Consider the following 660-residue polypeptide: tRNA 5-methylaminomethyl-2-thiouridine biosynthesis bifunctional protein MnmC (660 aa).

Residues 1–242 are tRNA (mnm(5)s(2)U34)-methyltransferase; sequence MTDRIVPATL…KRAMLVGEFA (242 aa). Residues 266 to 660 are FAD-dependent cmnm(5)s(2)U34 oxidoreductase; that stretch reads IGAGLAGCAV…VRALRHGRVA (395 aa).

This sequence in the N-terminal section; belongs to the methyltransferase superfamily. tRNA (mnm(5)s(2)U34)-methyltransferase family. The protein in the C-terminal section; belongs to the DAO family. FAD is required as a cofactor.

It localises to the cytoplasm. The catalysed reaction is 5-aminomethyl-2-thiouridine(34) in tRNA + S-adenosyl-L-methionine = 5-methylaminomethyl-2-thiouridine(34) in tRNA + S-adenosyl-L-homocysteine + H(+). Catalyzes the last two steps in the biosynthesis of 5-methylaminomethyl-2-thiouridine (mnm(5)s(2)U) at the wobble position (U34) in tRNA. Catalyzes the FAD-dependent demodification of cmnm(5)s(2)U34 to nm(5)s(2)U34, followed by the transfer of a methyl group from S-adenosyl-L-methionine to nm(5)s(2)U34, to form mnm(5)s(2)U34. This is tRNA 5-methylaminomethyl-2-thiouridine biosynthesis bifunctional protein MnmC from Burkholderia pseudomallei (strain 1710b).